Reading from the N-terminus, the 563-residue chain is Zinc finger CCHC domain-containing protein 7 (563 aa).

Disordered regions lie at residues 41 to 64 and 133 to 157; these read SQNL…VPGA and SHST…QNSS. A compositionally biased stretch (polar residues) spans 133–142; the sequence is SHSTPKVSAP. Low complexity predominate over residues 143 to 157; the sequence is QSNNFKSQKSCQNSS. CCHC-type zinc fingers lie at residues 265-282, 287-304, 305-322, 328-345, and 372-389; these read VVCR…NCPV, PACC…SCPS, RYCL…ECIE, KTCH…ACPE, and VYCC…ECKE. The disordered stretch occupies residues 443 to 494; the sequence is KVDAKPPAKKRKKKHPSKKERKGTIRDYECAETKQKKKHKKRKSGLQEIEGD. Residues 449–463 are compositionally biased toward basic residues; sequence PAKKRKKKHPSKKER. The span at 464–476 shows a compositional bias: basic and acidic residues; the sequence is KGTIRDYECAETK. A compositionally biased stretch (basic residues) spans 477-486; the sequence is QKKKHKKRKS.

Component of a nucleolar TRAMP-like complex, an ATP-dependent exosome regulatory complex consisting of a helicase (MTREX), an oligadenylate polymerase (PAPD5 or PAPD7), and a substrate specific RNA-binding factor (ZCCHC7 or ZCCHC8). Several TRAMP-like complexes exist with specific compositions and are associated with nuclear, or nucleolar RNA exosomes.

It localises to the nucleus. The protein localises to the nucleolus. In Xenopus laevis (African clawed frog), this protein is Zinc finger CCHC domain-containing protein 7 (zcchc7).